Reading from the N-terminus, the 1185-residue chain is Ovostatin homolog 1 (1185 aa).

The signal sequence occupies residues 1–21; that stretch reads MHVHVCVCLCVCIYTSSCVCA. 5 N-linked (GlcNAc...) asparagine glycosylation sites follow: N80, N155, N347, N452, and N725.

Belongs to the protease inhibitor I39 (alpha-2-macroglobulin) family. In terms of assembly, homotetramer.

The protein resides in the secreted. Functionally, is able to inhibit all four classes of proteinases by a unique 'trapping' mechanism. In Homo sapiens (Human), this protein is Ovostatin homolog 1 (OVOS1).